A 496-amino-acid chain; its full sequence is Ankyrin repeat domain-containing protein 53 (496 aa).

The segment covering 1–15 has biased composition (low complexity); sequence MASAGSTARRAGSGS. The segment at 1–66 is disordered; it reads MASAGSTARR…RPSEESDQTT (66 aa). A compositionally biased stretch (basic and acidic residues) spans 51-60; sequence AESKQPRPSE. 3 ANK repeats span residues 105–135, 139–172, and 176–205; these read KGFT…PVNL, NSQT…ALNA, and NGCT…NVHA. Positions 292-320 are disordered; sequence LVSNTKQARATALSKTPEQRGSQCSSSFH.

In terms of assembly, interacts with PSRC1; recruited by PSRC1 to the spindle during mitosis. Phosphorylated during mitosis.

The protein localises to the cytoplasm. It is found in the cytoskeleton. The protein resides in the spindle. It localises to the spindle pole. In terms of biological role, required for normal progression through mitosis. Involved in chromosome alignment and cytokinesis via regulation of microtubules polymerization. In Macaca fascicularis (Crab-eating macaque), this protein is Ankyrin repeat domain-containing protein 53 (ANKRD53).